The following is a 250-amino-acid chain: Dihydroorotate dehydrogenase B (NAD(+)), electron transfer subunit (250 aa).

One can recognise an FAD-binding FR-type domain in the interval 1 to 94 (MKVVAQEEIA…MGPQGNGFDL (94 aa)). FAD-binding positions include 45–48 (RPIS), 62–64 (IYR), and 69–70 (GT). Positions 214, 219, 222, and 237 each coordinate [2Fe-2S] cluster.

It belongs to the PyrK family. Heterotetramer of 2 PyrK and 2 PyrD type B subunits. [2Fe-2S] cluster serves as cofactor. Requires FAD as cofactor.

The protein operates within pyrimidine metabolism; UMP biosynthesis via de novo pathway; orotate from (S)-dihydroorotate (NAD(+) route): step 1/1. In terms of biological role, responsible for channeling the electrons from the oxidation of dihydroorotate from the FMN redox center in the PyrD type B subunit to the ultimate electron acceptor NAD(+). The sequence is that of Dihydroorotate dehydrogenase B (NAD(+)), electron transfer subunit from Streptococcus pneumoniae serotype 4 (strain ATCC BAA-334 / TIGR4).